The sequence spans 324 residues: Glyoxylate/hydroxypyruvate reductase B (324 aa).

Catalysis depends on residues R237 and E266. H285 (proton donor) is an active-site residue.

This sequence belongs to the D-isomer specific 2-hydroxyacid dehydrogenase family. GhrB subfamily. In terms of assembly, homodimer.

It is found in the cytoplasm. The catalysed reaction is glycolate + NADP(+) = glyoxylate + NADPH + H(+). It carries out the reaction (R)-glycerate + NAD(+) = 3-hydroxypyruvate + NADH + H(+). It catalyses the reaction (R)-glycerate + NADP(+) = 3-hydroxypyruvate + NADPH + H(+). In terms of biological role, catalyzes the NADPH-dependent reduction of glyoxylate and hydroxypyruvate into glycolate and glycerate, respectively. This Salmonella schwarzengrund (strain CVM19633) protein is Glyoxylate/hydroxypyruvate reductase B.